The chain runs to 320 residues: Solute carrier family 35 member B1 (320 aa).

A run of 8 helical transmembrane segments spans residues G9–L29, F49–I69, Q81–L103, Y134–Y154, T166–V186, M202–G222, I241–Y261, and V283–L303. The Di-lysine motif motif lies at K316–H320.

Belongs to the nucleotide-sugar transporter family. SLC35B subfamily.

The protein resides in the endoplasmic reticulum membrane. Probable sugar transporter. This is Solute carrier family 35 member B1 (slc35b1) from Xenopus laevis (African clawed frog).